A 300-amino-acid polypeptide reads, in one-letter code: Cytochrome f (300 aa).

The N-terminal stretch at 1–32 (MMTYLSKQFSKLLFGQLLFLFIGNLLLKPVQA) is a signal peptide. Residues tyrosine 33, cysteine 53, cysteine 56, and histidine 57 each contribute to the heme site. Residues 267–287 (LKTFIAFCVTVFIGQLAFVLK) form a helical membrane-spanning segment.

It belongs to the cytochrome f family. The 4 large subunits of the cytochrome b6-f complex are cytochrome b6, subunit IV (17 kDa polypeptide, petD), cytochrome f and the Rieske protein, while the 4 small subunits are PetG, PetL, PetM and PetN. The complex functions as a dimer. Requires heme as cofactor.

It localises to the plastid. The protein resides in the chloroplast thylakoid membrane. Component of the cytochrome b6-f complex, which mediates electron transfer between photosystem II (PSII) and photosystem I (PSI), cyclic electron flow around PSI, and state transitions. The sequence is that of Cytochrome f from Cyanidioschyzon merolae (strain NIES-3377 / 10D) (Unicellular red alga).